Here is a 284-residue protein sequence, read N- to C-terminus: ATP phosphoribosyltransferase (284 aa).

It belongs to the ATP phosphoribosyltransferase family. Long subfamily. Requires Mg(2+) as cofactor.

The protein resides in the cytoplasm. It carries out the reaction 1-(5-phospho-beta-D-ribosyl)-ATP + diphosphate = 5-phospho-alpha-D-ribose 1-diphosphate + ATP. Its pathway is amino-acid biosynthesis; L-histidine biosynthesis; L-histidine from 5-phospho-alpha-D-ribose 1-diphosphate: step 1/9. Feedback inhibited by histidine. Catalyzes the condensation of ATP and 5-phosphoribose 1-diphosphate to form N'-(5'-phosphoribosyl)-ATP (PR-ATP). Has a crucial role in the pathway because the rate of histidine biosynthesis seems to be controlled primarily by regulation of HisG enzymatic activity. This is ATP phosphoribosyltransferase from Pseudarthrobacter chlorophenolicus (strain ATCC 700700 / DSM 12829 / CIP 107037 / JCM 12360 / KCTC 9906 / NCIMB 13794 / A6) (Arthrobacter chlorophenolicus).